We begin with the raw amino-acid sequence, 171 residues long: S-ribosylhomocysteine lyase (171 aa).

Fe cation contacts are provided by His54, His58, and Cys128.

Belongs to the LuxS family. As to quaternary structure, homodimer. Fe cation serves as cofactor.

It catalyses the reaction S-(5-deoxy-D-ribos-5-yl)-L-homocysteine = (S)-4,5-dihydroxypentane-2,3-dione + L-homocysteine. Functionally, involved in the synthesis of autoinducer 2 (AI-2) which is secreted by bacteria and is used to communicate both the cell density and the metabolic potential of the environment. The regulation of gene expression in response to changes in cell density is called quorum sensing. Catalyzes the transformation of S-ribosylhomocysteine (RHC) to homocysteine (HC) and 4,5-dihydroxy-2,3-pentadione (DPD). This chain is S-ribosylhomocysteine lyase, found in Campylobacter concisus (strain 13826).